The sequence spans 610 residues: Myoneurin (610 aa).

The region spanning 24 to 89 is the BTB domain; it reads CDCTIVIGEF…IYTGTLNLDS (66 aa). Residues 169 to 197 form a disordered region; that stretch reads QGALAKKSSQTKKKKKAFNSPKTGQNKTV. Short sequence motifs (nuclear localization signal) lie at residues 174–190 and 257–262; these read KKSSQTKKKKKAFNSPK and KRKRGK. Polar residues predominate over residues 188 to 197; that stretch reads SPKTGQNKTV. Position 289 is a phosphoserine (S289). 8 consecutive C2H2-type zinc fingers follow at residues 302–324, 330–352, 358–381, 387–409, 415–437, 443–465, 471–493, and 499–522; these read PMCNTCGKVFSEASSLRRHMRIH, YVCHLCGKAFTQCNQLKTHVRTH, YKCELCDKGFAQKCQLVFHSRMHH, YKCDVCNLQFATSSNLKIHARKH, YVCDRCGQRFAQASTLTYHVRRH, YVCDTCGKAFAVSSSLITHSRKH, YICGICGKSFISSGELNKHFRSH, and FICELCGNSYTDIKNLKKHKTKVH. Residues 521–556 are disordered; that stretch reads VHSGADKTLDSSAEDHTLSEQDSIQKSPLSETMDVK. Basic and acidic residues predominate over residues 523-539; the sequence is SGADKTLDSSAEDHTLS. Over residues 540-550 the composition is skewed to polar residues; it reads EQDSIQKSPLS.

Belongs to the krueppel C2H2-type zinc-finger protein family. Mainly expressed in the neuromuscular system. Located in and around synaptic myonuclei in adult muscle. Expression is dysregulated after nerve injury. Also found in the testis, ovary and placenta.

It localises to the nucleus. The sequence is that of Myoneurin (MYNN) from Homo sapiens (Human).